The sequence spans 472 residues: Nuclear hormone receptor family member nhr-2 (472 aa).

Polar residues-rich tracts occupy residues 57–83 (TATN…LSQI), 90–112 (NDTI…HNQP), 138–147 (LSSTQSSPDN), and 159–171 (VRRN…SAST). Disordered stretches follow at residues 57–112 (TATN…HNQP) and 138–184 (LSST…RTNT). The segment at residues 215–297 (KDRCMVCGDN…VGMNRDNVRV (83 aa)) is a DNA-binding region (nuclear receptor). 2 consecutive NR C4-type zinc fingers follow at residues 218 to 238 (CMVC…CEGC) and 267 to 285 (CAAN…FAKC).

This sequence belongs to the nuclear hormone receptor family.

It localises to the nucleus. Functionally, orphan nuclear receptor. The sequence is that of Nuclear hormone receptor family member nhr-2 (nhr-2) from Caenorhabditis elegans.